We begin with the raw amino-acid sequence, 714 residues long: Polyribonucleotide nucleotidyltransferase (714 aa).

2 residues coordinate Mg(2+): Asp488 and Asp494. Residues 555–614 enclose the KH domain; the sequence is PRIEVMNIPTDKIRDVIGSGGKVIREIVEKTGAKINIEDDGTVKIASSNGKEIEAAKKWI. The S1 motif domain occupies 624-692; that stretch reads GEIYEGTVVK…ERGKVRLSMK (69 aa).

It belongs to the polyribonucleotide nucleotidyltransferase family. Mg(2+) serves as cofactor.

Its subcellular location is the cytoplasm. The catalysed reaction is RNA(n+1) + phosphate = RNA(n) + a ribonucleoside 5'-diphosphate. Involved in mRNA degradation. Catalyzes the phosphorolysis of single-stranded polyribonucleotides processively in the 3'- to 5'-direction. The sequence is that of Polyribonucleotide nucleotidyltransferase from Brucella melitensis biotype 2 (strain ATCC 23457).